Reading from the N-terminus, the 201-residue chain is L(+)-tartrate dehydratase subunit beta (201 aa).

His37 is a catalytic residue.

This sequence belongs to the class-I fumarase family. As to quaternary structure, heterotetramer of two alpha and two beta subunits.

It catalyses the reaction (2R,3R)-tartrate = oxaloacetate + H2O. This is L(+)-tartrate dehydratase subunit beta (ttdB) from Shigella sonnei (strain Ss046).